The primary structure comprises 345 residues: Major capsid protein (345 aa).

Intercapsomeric interactions regions lie at residues 11–25 (GTNQ…GDKL) and 152–156 (YNENI).

The protein belongs to the T7virus major capsid protein family. As to quaternary structure, homohexamer. Interacts with the connector protein and the minor capsid protein. Interacts with the capsid assembly scaffolding protein; capsid proteins and scaffolding proteins form building blocks that assemble to form the procapsid, each hexamer of the major capsid protein interacting with 2 scaffolding proteins.

It is found in the virion. In terms of biological role, assembles with the minor capsid protein to form an icosahedral capsid with a T=7 symmetry, about 60 nm in diameter, and consisting of 415 capsid proteins. The major and minor capsid proteins are incorporated into the capsid in about a 90/10 ratio respectively. Once the capsid is formed, encapsidates one single copy of the viral genome. The sequence is that of Major capsid protein from Escherichia coli (Bacteriophage T7).